A 137-amino-acid chain; its full sequence is Large ribosomal subunit protein uL16 (137 aa).

This sequence belongs to the universal ribosomal protein uL16 family. In terms of assembly, part of the 50S ribosomal subunit.

Its function is as follows. Binds 23S rRNA and is also seen to make contacts with the A and possibly P site tRNAs. The sequence is that of Large ribosomal subunit protein uL16 from Lawsonia intracellularis (strain PHE/MN1-00).